A 341-amino-acid polypeptide reads, in one-letter code: Hyaluronan and proteoglycan link protein 2 (341 aa).

Residues 1-27 (MPSRIPLPAFCCFLLPWAFTSFHKALG) form the signal peptide. Positions 35 to 143 (PHYLLPPIHE…GIEDESVALT (109 aa)) constitute an Ig-like V-type domain. Disulfide bonds link Cys-58–Cys-129, Cys-171–Cys-241, Cys-195–Cys-216, Cys-266–Cys-337, and Cys-291–Cys-312. Link domains follow at residues 149–243 (VVFP…FCFT) and 246–339 (LAGQ…YCYA).

Belongs to the HAPLN family. As to expression, brain. Predominantly expressed by neurons. Colocalizes with versican V2 in developing and adult cerebellar white matter and at the nodes of Ranvier.

Its subcellular location is the secreted. It is found in the extracellular space. It localises to the extracellular matrix. Mediates a firm binding of versican V2 to hyaluronic acid. May play a pivotal role in the formation of the hyaluronan-associated matrix in the central nervous system (CNS) which facilitates neuronal conduction and general structural stabilization. Binds to hyaluronic acid. In Mus musculus (Mouse), this protein is Hyaluronan and proteoglycan link protein 2 (Hapln2).